The sequence spans 81 residues: Bursicon (81 aa).

As to quaternary structure, heterodimer of burs and pburs. In terms of tissue distribution, central nervous system. Coexpressed with CCAP in most CCAP-specific neurons. Coexpressed with pburs in the large bilateral lateral neurosecretory neurons of the first three unfused abdominal ganglia and in all anterior bilateral cell pairs in the thoracic ganglia.

The protein resides in the secreted. Functionally, final heterodimeric neurohormone released at the end of the molting cycle, involved in the sclerotization (tanning) of the insect cuticle, melanization and wing spreading. This chain is Bursicon (burs), found in Periplaneta americana (American cockroach).